Consider the following 311-residue polypeptide: Regulator of rDNA transcription protein 6 (311 aa).

Helical transmembrane passes span 32 to 52 and 271 to 291; these read PHLLGRILLFMSILFITSAEL and YLIVGFVSLMVAQLISNIIVT.

The protein localises to the membrane. Functionally, may be involved in the modulation of rDNA transcription. This is Regulator of rDNA transcription protein 6 (RRT6) from Saccharomyces cerevisiae (strain ATCC 204508 / S288c) (Baker's yeast).